Consider the following 332-residue polypeptide: Biotin synthase (332 aa).

The 230-residue stretch at His-53–Arg-282 folds into the Radical SAM core domain. [4Fe-4S] cluster-binding residues include Cys-71, Cys-75, and Cys-78. [2Fe-2S] cluster is bound by residues Cys-115, Cys-147, Cys-207, and Arg-277.

The protein belongs to the radical SAM superfamily. Biotin synthase family. Homodimer. The cofactor is [4Fe-4S] cluster. Requires [2Fe-2S] cluster as cofactor.

It catalyses the reaction (4R,5S)-dethiobiotin + (sulfur carrier)-SH + 2 reduced [2Fe-2S]-[ferredoxin] + 2 S-adenosyl-L-methionine = (sulfur carrier)-H + biotin + 2 5'-deoxyadenosine + 2 L-methionine + 2 oxidized [2Fe-2S]-[ferredoxin]. Its pathway is cofactor biosynthesis; biotin biosynthesis; biotin from 7,8-diaminononanoate: step 2/2. Its function is as follows. Catalyzes the conversion of dethiobiotin (DTB) to biotin by the insertion of a sulfur atom into dethiobiotin via a radical-based mechanism. The chain is Biotin synthase from Bacillus cereus (strain ATCC 14579 / DSM 31 / CCUG 7414 / JCM 2152 / NBRC 15305 / NCIMB 9373 / NCTC 2599 / NRRL B-3711).